A 254-amino-acid chain; its full sequence is Metallo-beta-lactamase type 2 (254 aa).

The signal sequence occupies residues 1 to 27 (MMKGWMKCGLAGAVVLMASFWGGSVRA). Aspartate 99 contacts Zn(2+). Substrate-binding residues include threonine 135 and histidine 174. Cysteine 193 lines the Zn(2+) pocket. Substrate contacts are provided by lysine 196 and asparagine 201. Position 231 (histidine 231) interacts with Zn(2+).

Belongs to the metallo-beta-lactamase superfamily. Class-B beta-lactamase family. Monomer. Zn(2+) serves as cofactor.

The protein resides in the periplasm. The enzyme catalyses a beta-lactam + H2O = a substituted beta-amino acid. With respect to regulation, competitively inhibited by mercaptophosphonate and pyridine carboxylate derivatives. Also inhibited by the binding of a second zinc ion and by chelating agents such as EDTA. Functionally, confers resistance to the different beta-lactams antibiotics (penicillin, cephalosporin and carbapenem) via the hydrolysis of the beta-lactam ring. It is able to hydrolyze penicillin and imipenem, but is much less active against cephalothin, cefotaxime, meropenem and ceftazidime. The sequence is that of Metallo-beta-lactamase type 2 from Aeromonas hydrophila.